The following is a 178-amino-acid chain: ATP synthase subunit delta (178 aa).

Belongs to the ATPase delta chain family. In terms of assembly, F-type ATPases have 2 components, F(1) - the catalytic core - and F(0) - the membrane proton channel. F(1) has five subunits: alpha(3), beta(3), gamma(1), delta(1), epsilon(1). F(0) has three main subunits: a(1), b(2) and c(10-14). The alpha and beta chains form an alternating ring which encloses part of the gamma chain. F(1) is attached to F(0) by a central stalk formed by the gamma and epsilon chains, while a peripheral stalk is formed by the delta and b chains.

Its subcellular location is the cell membrane. In terms of biological role, f(1)F(0) ATP synthase produces ATP from ADP in the presence of a proton or sodium gradient. F-type ATPases consist of two structural domains, F(1) containing the extramembraneous catalytic core and F(0) containing the membrane proton channel, linked together by a central stalk and a peripheral stalk. During catalysis, ATP synthesis in the catalytic domain of F(1) is coupled via a rotary mechanism of the central stalk subunits to proton translocation. This protein is part of the stalk that links CF(0) to CF(1). It either transmits conformational changes from CF(0) to CF(1) or is implicated in proton conduction. The sequence is that of ATP synthase subunit delta from Streptococcus pyogenes serotype M1.